The sequence spans 146 residues: Ecotin-like protein 1 (146 aa).

The protein belongs to the protease inhibitor I11 (ecotin) family.

In Leishmania braziliensis, this protein is Ecotin-like protein 1 (ISP1).